The following is a 3550-amino-acid chain: Zinc finger homeobox protein 4 (3550 aa).

Met1 is modified (N-acetylmethionine). Disordered regions lie at residues 1–54, 426–479, and 521–614; these read METC…LKTD, HLSS…AYSN, and TSSS…IECP. Residues 9-20 are compositionally biased toward polar residues; sequence ISRQENGQSTSK. Composition is skewed to basic and acidic residues over residues 39-54 and 433-451; these read EPDR…LKTD and KMSE…KEST. The span at 467–479 shows a compositional bias: acidic residues; that stretch reads EPGDEDEEDAYSN. Polar residues-rich tracts occupy residues 542–553 and 566–576; these read GRSNGNVTNSYS and RDGTTAAPSET. 3 C2H2-type zinc fingers span residues 611–634, 642–665, and 697–721; these read IECP…TMMH, LKCP…KEKH, and FRCE…SDKH. Positions 739 to 763 are disordered; it reads HSAPTPNTSLSGCGTPSPSKPKQKP. Over residues 742–752 the composition is skewed to polar residues; sequence PTPNTSLSGCG. 4 C2H2-type zinc fingers span residues 765 to 787, 915 to 939, 971 to 993, and 1019 to 1043; these read RRCE…MTSE, YQCK…TDKH, LKCN…TTNH, and YYCA…SVKH. Positions 1100–1142 are disordered; the sequence is KAASEEPSEDAGDPLKPPTVAEDDEKEAHKRDNSEGKISTKDP. Basic and acidic residues predominate over residues 1125-1142; it reads KEAHKRDNSEGKISTKDP. A Glycyl lysine isopeptide (Lys-Gly) (interchain with G-Cter in SUMO2) cross-link involves residue Lys1165. C2H2-type zinc fingers lie at residues 1188-1211 and 1217-1240; these read YQYP…LSQH and ICCP…THLH. Residues 1271–1339 form a disordered region; sequence APEKSEQDPP…EWNKTSSKDV (69 aa). Residues 1297 to 1326 are compositionally biased toward basic and acidic residues; it reads VDDKSMSGLEDSKVGVEIKNEEQKPAKEPV. Residue Lys1315 forms a Glycyl lysine isopeptide (Lys-Gly) (interchain with G-Cter in SUMO2) linkage. C2H2-type zinc fingers lie at residues 1368-1390 and 1396-1419; these read YRCN…SQYH and TMCT…EAGH. Positions 1467–1492 are disordered; it reads EGKASPVESDGSSIPDDLGLEPKRTL. The segment at 1512-1538 adopts a C2H2-type 12 zinc-finger fold; the sequence is YKCTVCKESFTQKNILLVHYNSVSHLH. Lys1562 participates in a covalent cross-link: Glycyl lysine isopeptide (Lys-Gly) (interchain with G-Cter in SUMO2). A C2H2-type 13 zinc finger spans residues 1564–1588; the sequence is YKCSTCSVAYSQSSTLEIHMRSVLH. Residues 1779-1873 are disordered; the sequence is PQLQPQNQQP…CIPPPRIASG (95 aa). Residues 1792 to 1808 are compositionally biased toward low complexity; the sequence is QQQQPQQQPSKLLKQEQ. Lys1805 participates in a covalent cross-link: Glycyl lysine isopeptide (Lys-Gly) (interchain with G-Cter in SUMO2). Residues 1823–1860 show a composition bias toward basic and acidic residues; that stretch reads PSYKEAEEVTEKQEKPKQEFINDTEGLKDSKDIKKQKS. The C2H2-type 14 zinc-finger motif lies at 1916–1939; sequence LECGICGKLFSNVLILKSHQEHVH. Residues 1984 to 2006 are disordered; sequence KIPNTVSAPLQAPPPTPPSAPQQ. Pro residues predominate over residues 1994–2003; the sequence is QAPPPTPPSA. 2 consecutive DNA-binding regions (homeobox) follow at residues 2069–2128 and 2166–2225; these read FKRP…RQRN and KRSS…RKSY. The C2H2-type 15; degenerate zinc finger occupies 2252-2276; it reads YQCKKCNVVFPRIFDLITHQKKQCY. Over residues 2318-2331 the composition is skewed to polar residues; the sequence is TLVASSGSGTSTPL. Residues 2318–2412 form a disordered region; that stretch reads TLVASSGSGT…SQTPIPSSPL (95 aa). Residues 2337–2355 are compositionally biased toward basic and acidic residues; that stretch reads PEPEKNSPKTEYPGEKTKQ. Residues 2356-2376 show a composition bias toward polar residues; the sequence is SDPSLPQGTKSAPSSVLTSSE. Residues 2383–2392 are compositionally biased toward pro residues; that stretch reads PQPPTQPPKQ. Residues 2401 to 2412 are compositionally biased toward polar residues; the sequence is SASQTPIPSSPL. Residues 2430-2452 form a C2H2-type 16 zinc finger; the sequence is YPCDQCTLAFPTLELWKEHQHMH. A compositionally biased stretch (polar residues) spans 2490–2508; that stretch reads GSSLTQMPPQTSTAHTTAP. The tract at residues 2490 to 2545 is disordered; the sequence is GSSLTQMPPQTSTAHTTAPASVAASLKRKLEDKEDNNCSEKEGGNSGEDQHRDKRL. The segment covering 2517–2541 has biased composition (basic and acidic residues); it reads RKLEDKEDNNCSEKEGGNSGEDQHR. Positions 2542–2601 form a DNA-binding region, homeobox 3; sequence DKRLRTTITPEQLEILYEKYLLDSNPTRKMLDHIAREVGLKKRVVQVWFQNTRARERKGQ. A C2H2-type 17 zinc finger spans residues 2612-2635; that stretch reads KRCPFCRALFKAKSALESHIRSRH. At Ser2645 the chain carries Phosphoserine. 2 disordered regions span residues 2746–2791 and 2810–2866; these read AISD…ATTP and HFND…PGHK. A compositionally biased stretch (polar residues) spans 2781 to 2791; it reads LDSLQKPATTP. Positions 2811–2820 are enriched in basic and acidic residues; it reads FNDKDGDHDQ. Residues 2843 to 2855 are compositionally biased toward low complexity; it reads PSSPNPFGSSNPF. Positions 2865–2924 form a DNA-binding region, homeobox 4; it reads HKRFRTQMSNLQLKVLKACFSDYRTPTMQECEMLGNEIGLPKRVVQVWFQNARAKERKFK. The C2H2-type 18 zinc-finger motif lies at 2943–2967; it reads PECTLCGVKYSARLSIRDHIFSKQH. 2 disordered regions span residues 3051–3156 and 3261–3318; these read PSSL…EEKI and QDSL…VQLD. The span at 3058-3068 shows a compositional bias: polar residues; the sequence is PQNSNTLTSPG. The segment covering 3075-3088 has biased composition (low complexity); sequence PSSATSSPALSLSS. Positions 3097 to 3109 are enriched in pro residues; the sequence is TPPPPPPPPPPPS. The span at 3136 to 3156 shows a compositional bias: basic and acidic residues; the sequence is IKEEESEAIKPEKHPKKEEKI. Lys3137 is covalently cross-linked (Glycyl lysine isopeptide (Lys-Gly) (interchain with G-Cter in SUMO2)). Residues 3248-3277 adopt a coiled-coil conformation; sequence ALLQQYQQYQQSLQDSLQKQQKQQQEQQQK. The span at 3261-3276 shows a compositional bias: low complexity; sequence QDSLQKQQKQQQEQQQ. Positions 3298-3318 are enriched in basic and acidic residues; the sequence is SETKEEKSTAPESTKEEVQLD. The C2H2-type 19; degenerate zinc-finger motif lies at 3337 to 3361; the sequence is FVCRKCQMMFTDEDATVNHQKSFCY. A C2H2-type 20 zinc finger spans residues 3381–3405; that stretch reads YQCLACDLALSGNEALSQHLQSSLH. A disordered region spans residues 3424-3445; it reads LPHSVCSPPPNTSSTSPSAASS. Residues 3435-3445 are compositionally biased toward low complexity; sequence TSSTSPSAASS.

The protein belongs to the krueppel C2H2-type zinc-finger protein family. In terms of tissue distribution, expressed in brain, heart, lung, muscle and small intestine. No expression detected in undifferentiated P19 cells, however, expression was seen following retinoic acid treatment to induce neuronal differentiation. Expressed in undifferentiated C2C12 cells, following induction of muscle differentiation in a low-serum medium, expression levels were decreased.

It is found in the nucleus. Its function is as follows. May play a role in neural and muscle differentiation. May be involved in transcriptional regulation. This Mus musculus (Mouse) protein is Zinc finger homeobox protein 4 (Zfhx4).